The primary structure comprises 156 residues: Snaclec alboaggregin-B subunit alpha (156 aa).

An N-terminal signal peptide occupies residues 1–23; it reads MGRFIFVSFGLLVVFLSLSGTGA. The C-type lectin domain occupies 24–151; sequence DCPSDWSSFK…CEQKHIFMCK (128 aa). 3 disulfide bridges follow: C25–C36, C53–C150, and C125–C142.

This sequence belongs to the snaclec family. In terms of assembly, heterodimer of subunits alpha and beta; disulfide-linked. In terms of tissue distribution, expressed by the venom gland.

The protein localises to the secreted. Functionally, weakly agglutinates platelets at high doses by binding to GPIbalpha (GP1BA). The sequence is that of Snaclec alboaggregin-B subunit alpha from Trimeresurus albolabris (White-lipped pit viper).